Consider the following 377-residue polypeptide: Succinyl-diaminopimelate desuccinylase (377 aa).

His-66 is a binding site for Zn(2+). Asp-68 is an active-site residue. Residue Asp-99 participates in Zn(2+) binding. Glu-133 serves as the catalytic Proton acceptor. Positions 134, 162, and 348 each coordinate Zn(2+).

Belongs to the peptidase M20A family. DapE subfamily. Homodimer. Zn(2+) is required as a cofactor. The cofactor is Co(2+).

The enzyme catalyses N-succinyl-(2S,6S)-2,6-diaminopimelate + H2O = (2S,6S)-2,6-diaminopimelate + succinate. The protein operates within amino-acid biosynthesis; L-lysine biosynthesis via DAP pathway; LL-2,6-diaminopimelate from (S)-tetrahydrodipicolinate (succinylase route): step 3/3. Its function is as follows. Catalyzes the hydrolysis of N-succinyl-L,L-diaminopimelic acid (SDAP), forming succinate and LL-2,6-diaminopimelate (DAP), an intermediate involved in the bacterial biosynthesis of lysine and meso-diaminopimelic acid, an essential component of bacterial cell walls. This is Succinyl-diaminopimelate desuccinylase from Alcanivorax borkumensis (strain ATCC 700651 / DSM 11573 / NCIMB 13689 / SK2).